A 255-amino-acid polypeptide reads, in one-letter code: uncharacterized protein (255 aa).

The protein belongs to the methyltransferase superfamily.

This is an uncharacterized protein from Mycolicibacterium paratuberculosis (strain ATCC BAA-968 / K-10) (Mycobacterium paratuberculosis).